The chain runs to 402 residues: Tol-Pal system protein TolB (402 aa).

An N-terminal signal peptide occupies residues 1–17; that stretch reads MKKIVAIFLVFLGSLWA.

Belongs to the TolB family. In terms of assembly, the Tol-Pal system is composed of five core proteins: the inner membrane proteins TolA, TolQ and TolR, the periplasmic protein TolB and the outer membrane protein Pal. They form a network linking the inner and outer membranes and the peptidoglycan layer.

It is found in the periplasm. Functionally, part of the Tol-Pal system, which plays a role in outer membrane invagination during cell division and is important for maintaining outer membrane integrity. The chain is Tol-Pal system protein TolB from Campylobacter jejuni subsp. jejuni serotype O:2 (strain ATCC 700819 / NCTC 11168).